The following is a 295-amino-acid chain: GDP-polyphosphate phosphotransferase (295 aa).

Positions 1 to 28 (MDIPSVDVSTATNDGASSRAKGHRSAAP) are disordered. Residues 7-16 (DVSTATNDGA) show a composition bias toward polar residues. 2 positions are modified to phosphohistidine: H115 and H247.

It belongs to the polyphosphate kinase 2 (PPK2) family. Class I subfamily. In terms of assembly, interacts with Ndk. Autophosphorylated at His-115 and His-247 using polyP as a phosphate donor.

It carries out the reaction [phosphate](n) + GTP = [phosphate](n+1) + GDP. In terms of biological role, uses inorganic polyphosphate (polyP) as a donor to convert GDP to GTP. In addition, modulates nucleotide triphosphate synthesis catalyzed by the nucleoside diphosphate kinase (Ndk) in favor of GTP production over CTP or UTP. Plays an important role in survival of M.tuberculosis in macrophages. In Mycobacterium tuberculosis (strain ATCC 25618 / H37Rv), this protein is GDP-polyphosphate phosphotransferase.